The chain runs to 326 residues: JNK1/MAPK8-associated membrane protein homolog (326 aa).

The Lumenal segment spans residues 1–71; it reads MSSLSGHAST…CESCDTPLQP (71 aa). Asn27 is a glycosylation site (N-linked (GlcNAc...) asparagine). A helical transmembrane segment spans residues 72-92; it reads YDWMYLLFIALLPLLLHMQFI. At 93 to 108 the chain is on the cytoplasmic side; the sequence is RIARKYCRTRYYEVSE. Residues 109 to 129 form a helical membrane-spanning segment; the sequence is YLCVILENVIACVIAVLIYPP. Topologically, residues 130 to 166 are lumenal; sequence RFTFFLNGCSKTDIKEWYPACYNPRIGYTKTMRCTYE. The helical transmembrane segment at 167–187 threads the bilayer; the sequence is VVFPLYSITFIHHLILIGSIL. Residues 188 to 208 are Cytoplasmic-facing; the sequence is VLRSTLYCVLLYKTYNGKPFY. 2 helical membrane passes run 209-229 and 230-250; these read AAIV…GVVF and YTFP…HLAL. Residues 251–269 are Cytoplasmic-facing; that stretch reads EGKRPLKEMIVRIATSPTH. Residues 270–290 traverse the membrane as a helical segment; that stretch reads LIFLSITMLMLSFGVIAIIAP. At 291–296 the chain is on the lumenal side; that stretch reads LDIPYR. A helical membrane pass occupies residues 297-317; sequence WSFLCIVPVPFIFYMATIPFS. Residues 318-326 lie on the Cytoplasmic side of the membrane; that stretch reads NPTTTMRLS.

It is found in the endoplasmic reticulum membrane. Facilitates degradation of misfolded endoplasmic reticulum (ER) proteins through the recruitment of components of the proteasome and endoplasmic reticulum-associated degradation (ERAD) system. Involved in ER stress response. This Caenorhabditis elegans protein is JNK1/MAPK8-associated membrane protein homolog.